Here is a 286-residue protein sequence, read N- to C-terminus: Flagellin FlaB1 (286 aa).

The tract at residues 231–286 is required for interaction with FliW; the sequence is LDIAAENLQAAESRIRDANIAKQMVEYTKNQVLTQSGTAMLAQANTSAQSILSILR.

The protein belongs to the bacterial flagellin family. In terms of assembly, the flagellum consists of an outer layer composed of repeating units of FlaA around a core that contains several antigenically related polypeptides. Interacts via its C-terminus with FliW; a synthetic peptide of residues 229-247 partially blocks binding to FliW.

It is found in the periplasmic flagellum. The protein resides in the periplasm. Functionally, component of the core of the flagella. The sequence is that of Flagellin FlaB1 (flaB1) from Treponema pallidum (strain Nichols).